The primary structure comprises 552 residues: Putative phosphate permease MT2339 (552 aa).

A run of 13 helical transmembrane segments spans residues 38–58 (WHLSFSLLLAGSFVLFSWWAF), 69–89 (ILVLATVVGMFMAFNVGGNDV), 107–127 (ALLVAAIFEVSGAVIAGGDVT), 146–166 (DFMNIMLSALSAAALWLLFAN), 178–198 (IIGGIVGAAIALGMVSGQGGA), 213–233 (VSWVLSPVLGGLVSYLLYGVI), 326–346 (VPLVAAAGSMIIVAMLLFKGF), 360–380 (FIIAMVGAAVWMATFIFAKTL), 389–409 (TFLMFSWMQVFTASGFAFSHG), 437–457 (AVPAAAMVTFGVALCAGLWFI), 472–492 (MHPASGFAAELSAAGVVMGAT), 493–513 (VLGLPVSSTHILIGAVLGVGI), and 526–546 (IVLAWVITLPSAAILASVGLV).

This sequence belongs to the inorganic phosphate transporter (PiT) (TC 2.A.20) family.

The protein resides in the cell membrane. Functionally, potential transporter for phosphate. This is Putative phosphate permease MT2339 from Mycobacterium tuberculosis (strain CDC 1551 / Oshkosh).